We begin with the raw amino-acid sequence, 281 residues long: NADPH-dependent 7-cyano-7-deazaguanine reductase (281 aa).

88 to 90 (IES) contributes to the substrate binding site. 90–91 (SK) contributes to the NADPH binding site. Cys-189 functions as the Thioimide intermediate in the catalytic mechanism. Asp-196 serves as the catalytic Proton donor. Substrate is bound at residue 228-229 (HE). An NADPH-binding site is contributed by 257–258 (RG).

The protein belongs to the GTP cyclohydrolase I family. QueF type 2 subfamily. Homodimer.

The protein localises to the cytoplasm. The catalysed reaction is 7-aminomethyl-7-carbaguanine + 2 NADP(+) = 7-cyano-7-deazaguanine + 2 NADPH + 3 H(+). The protein operates within tRNA modification; tRNA-queuosine biosynthesis. Catalyzes the NADPH-dependent reduction of 7-cyano-7-deazaguanine (preQ0) to 7-aminomethyl-7-deazaguanine (preQ1). This is NADPH-dependent 7-cyano-7-deazaguanine reductase from Erwinia tasmaniensis (strain DSM 17950 / CFBP 7177 / CIP 109463 / NCPPB 4357 / Et1/99).